A 772-amino-acid polypeptide reads, in one-letter code: Lon protease (772 aa).

Positions 6–200 (YPTLPLKNTV…LMHRYLNHEV (195 aa)) constitute a Lon N-terminal domain. Residue 352–359 (GPPGVGKT) participates in ATP binding. In terms of domain architecture, Lon proteolytic spans 588–769 (QLAPGVAAGL…EEVLAEAIPD (182 aa)). Active-site residues include Ser675 and Lys718.

The protein belongs to the peptidase S16 family. In terms of assembly, homohexamer. Organized in a ring with a central cavity.

It localises to the cytoplasm. It carries out the reaction Hydrolysis of proteins in presence of ATP.. In terms of biological role, ATP-dependent serine protease that mediates the selective degradation of mutant and abnormal proteins as well as certain short-lived regulatory proteins. Required for cellular homeostasis and for survival from DNA damage and developmental changes induced by stress. Degrades polypeptides processively to yield small peptide fragments that are 5 to 10 amino acids long. Binds to DNA in a double-stranded, site-specific manner. The chain is Lon protease from Nitrosococcus oceani (strain ATCC 19707 / BCRC 17464 / JCM 30415 / NCIMB 11848 / C-107).